Consider the following 218-residue polypeptide: Cytidylate kinase (218 aa).

10–18 (GPAGSGKST) provides a ligand contact to ATP.

It belongs to the cytidylate kinase family. Type 1 subfamily.

The protein localises to the cytoplasm. It catalyses the reaction CMP + ATP = CDP + ADP. The catalysed reaction is dCMP + ATP = dCDP + ADP. The chain is Cytidylate kinase from Fusobacterium nucleatum subsp. nucleatum (strain ATCC 25586 / DSM 15643 / BCRC 10681 / CIP 101130 / JCM 8532 / KCTC 2640 / LMG 13131 / VPI 4355).